A 432-amino-acid chain; its full sequence is Phosphoprotein associated with glycosphingolipid-enriched microdomains 1 (432 aa).

The Extracellular segment spans residues 1–16; it reads MGPAGSLLGSGQMQIT. Residues 17 to 37 form a helical; Signal-anchor for type III membrane protein membrane-spanning segment; it reads LWGSLAAVAIFFVITFLIFLC. 2 S-palmitoyl cysteine lipidation sites follow: Cys37 and Cys40. Residues 38–432 lie on the Cytoplasmic side of the membrane; it reads SSCDREKKPR…LQQGRDITRL (395 aa). 2 positions are modified to phosphoserine: Ser50 and Ser61. Residue Tyr105 is modified to Phosphotyrosine; by LYN. Positions 110–122 are enriched in polar residues; it reads TSASDLLDSQDST. Positions 110–137 are disordered; that stretch reads TSASDLLDSQDSTGKPKCHQSRELPRIP. Phosphotyrosine occurs at positions 163, 181, and 227. Disordered stretches follow at residues 197–230 and 244–432; these read EKGHSGKAKSTSASKELPGPQTEGKAEFAEYASV and SILG…ITRL. The segment covering 220–230 has biased composition (basic and acidic residues); that stretch reads GKAEFAEYASV. Ser229 carries the phosphoserine modification. Polar residues predominate over residues 316–356; it reads MYSSVNKPGQLVNKSGQSLTVPESTYTSIQGDPQRSPSSCN. Phosphotyrosine; by FYN and LYN is present on Tyr317. The interaction with CSK stretch occupies residues 317-320; the sequence is YSSV. Ser354 carries the post-translational modification Phosphoserine. Tyr359 is subject to Phosphotyrosine. Ser380 is modified (phosphoserine). Phosphotyrosine occurs at positions 387 and 417. The interval 430–432 is interaction with NHERF1; it reads TRL.

As to quaternary structure, interacts with FYN. When phosphorylated, interacts with CSK. Interacts with NHERF1/EBP50. In resting T-cells, part of a PAG1-NHERF1-MSN complex which is disrupted upon TCR activation. Interacts with LYN on plasma membrane lipid rafts. Identified in a complex with LYN and STAT3. Palmitoylated. Post-translationally, phosphorylated by FYN on Tyr-317 in resting T-cells; which promotes interaction with CSK. Dephosphorylated by PTPRC/CD45 upon TCR activation; which leads to CSK dissociation. May also be dephosphorylated by PTPN11. Hyperphosphorylated in mast cells upon FCER1 activation. Phosphorylated by LYN. Ubiquitously expressed. Present in germinal center B-cells, plasma cells, T-cells, monocytes and platelets (at protein level).

The protein localises to the cell membrane. Its function is as follows. Negatively regulates TCR (T-cell antigen receptor)-mediated signaling in T-cells and FCER1 (high affinity immunoglobulin epsilon receptor)-mediated signaling in mast cells. Promotes CSK activation and recruitment to lipid rafts, which results in LCK inhibition. Inhibits immunological synapse formation by preventing dynamic arrangement of lipid raft proteins. May be involved in cell adhesion signaling. The protein is Phosphoprotein associated with glycosphingolipid-enriched microdomains 1 (PAG1) of Homo sapiens (Human).